A 61-amino-acid polypeptide reads, in one-letter code: Small ribosomal subunit protein uS14 (61 aa).

The Zn(2+) site is built by Cys-24, Cys-27, Cys-40, and Cys-43.

The protein belongs to the universal ribosomal protein uS14 family. Zinc-binding uS14 subfamily. In terms of assembly, part of the 30S ribosomal subunit. Contacts proteins S3 and S10. Zn(2+) serves as cofactor.

In terms of biological role, binds 16S rRNA, required for the assembly of 30S particles and may also be responsible for determining the conformation of the 16S rRNA at the A site. The sequence is that of Small ribosomal subunit protein uS14 from Streptococcus equi subsp. zooepidemicus (strain H70).